A 166-amino-acid polypeptide reads, in one-letter code: ATP synthase subunit b (166 aa).

A helical transmembrane segment spans residues Phe-27–Pro-47. Residues Ser-124 to Ser-143 are disordered.

It belongs to the ATPase B chain family. As to quaternary structure, F-type ATPases have 2 components, F(1) - the catalytic core - and F(0) - the membrane proton channel. F(1) has five subunits: alpha(3), beta(3), gamma(1), delta(1), epsilon(1). F(0) has three main subunits: a(1), b(2) and c(10-14). The alpha and beta chains form an alternating ring which encloses part of the gamma chain. F(1) is attached to F(0) by a central stalk formed by the gamma and epsilon chains, while a peripheral stalk is formed by the delta and b chains.

The protein localises to the cell membrane. In terms of biological role, f(1)F(0) ATP synthase produces ATP from ADP in the presence of a proton or sodium gradient. F-type ATPases consist of two structural domains, F(1) containing the extramembraneous catalytic core and F(0) containing the membrane proton channel, linked together by a central stalk and a peripheral stalk. During catalysis, ATP synthesis in the catalytic domain of F(1) is coupled via a rotary mechanism of the central stalk subunits to proton translocation. Functionally, component of the F(0) channel, it forms part of the peripheral stalk, linking F(1) to F(0). In Mycolicibacterium vanbaalenii (strain DSM 7251 / JCM 13017 / BCRC 16820 / KCTC 9966 / NRRL B-24157 / PYR-1) (Mycobacterium vanbaalenii), this protein is ATP synthase subunit b.